The sequence spans 254 residues: uncharacterized protein (254 aa).

2 residues coordinate NADP(+): V7 and N85. The Proton donor role is filled by S136. NADP(+)-binding residues include Y150, K154, V181, and T183. The Proton acceptor role is filled by Y150. The active-site Lowers pKa of active site Tyr is the K154.

Belongs to the short-chain dehydrogenases/reductases (SDR) family.

This is an uncharacterized protein from Saccharomyces cerevisiae (strain ATCC 204508 / S288c) (Baker's yeast).